The primary structure comprises 100 residues: UPF0213 protein YhbQ (100 aa).

Residues 2 to 77 form the GIY-YIG domain; that stretch reads TPWFLYLIRT…KQLTKRQKER (76 aa).

The protein belongs to the UPF0213 family.

This is UPF0213 protein YhbQ from Escherichia coli O127:H6 (strain E2348/69 / EPEC).